A 158-amino-acid polypeptide reads, in one-letter code: Phosphopantetheine adenylyltransferase (158 aa).

Residue T10 participates in substrate binding. ATP is bound by residues 10–11 and H18; that span reads TF. The substrate site is built by K42, L74, and R88. ATP contacts are provided by residues 89–91, E99, and 124–130; these read GIR and WRYLSST.

Belongs to the bacterial CoaD family. Homohexamer. The cofactor is Mg(2+).

It localises to the cytoplasm. It carries out the reaction (R)-4'-phosphopantetheine + ATP + H(+) = 3'-dephospho-CoA + diphosphate. It participates in cofactor biosynthesis; coenzyme A biosynthesis; CoA from (R)-pantothenate: step 4/5. Its function is as follows. Reversibly transfers an adenylyl group from ATP to 4'-phosphopantetheine, yielding dephospho-CoA (dPCoA) and pyrophosphate. This chain is Phosphopantetheine adenylyltransferase, found in Actinobacillus pleuropneumoniae serotype 3 (strain JL03).